The chain runs to 636 residues: Threonine--tRNA ligase (636 aa).

In terms of domain architecture, TGS spans 1–63 (MSSISIALPD…KDDSRVEIIT (63 aa)). Residues 243-534 (DHRRLGRELD…LIEHYAGNFP (292 aa)) form a catalytic region. The Zn(2+) site is built by C335, H386, and H511.

It belongs to the class-II aminoacyl-tRNA synthetase family. Homodimer. The cofactor is Zn(2+).

The protein resides in the cytoplasm. It carries out the reaction tRNA(Thr) + L-threonine + ATP = L-threonyl-tRNA(Thr) + AMP + diphosphate + H(+). In terms of biological role, catalyzes the attachment of threonine to tRNA(Thr) in a two-step reaction: L-threonine is first activated by ATP to form Thr-AMP and then transferred to the acceptor end of tRNA(Thr). Also edits incorrectly charged L-seryl-tRNA(Thr). The polypeptide is Threonine--tRNA ligase (Pelobacter propionicus (strain DSM 2379 / NBRC 103807 / OttBd1)).